The chain runs to 338 residues: Ketol-acid reductoisomerase (NADP(+)) (338 aa).

The KARI N-terminal Rossmann domain maps to 1 to 181 (MKVYYDKDAD…GGGRTGIIET (181 aa)). NADP(+) contacts are provided by residues 24 to 27 (YGSQ), Arg-47, Ser-50, Ser-52, and 82 to 85 (DEFQ). His-107 is a catalytic residue. Gly-133 serves as a coordination point for NADP(+). The KARI C-terminal knotted domain occupies 182–327 (TFKDETETDL…AKLRSMMPWI (146 aa)). Asp-190, Glu-194, Glu-226, and Glu-230 together coordinate Mg(2+). Ser-251 provides a ligand contact to substrate.

Belongs to the ketol-acid reductoisomerase family. Requires Mg(2+) as cofactor.

The catalysed reaction is (2R)-2,3-dihydroxy-3-methylbutanoate + NADP(+) = (2S)-2-acetolactate + NADPH + H(+). It carries out the reaction (2R,3R)-2,3-dihydroxy-3-methylpentanoate + NADP(+) = (S)-2-ethyl-2-hydroxy-3-oxobutanoate + NADPH + H(+). It functions in the pathway amino-acid biosynthesis; L-isoleucine biosynthesis; L-isoleucine from 2-oxobutanoate: step 2/4. Its pathway is amino-acid biosynthesis; L-valine biosynthesis; L-valine from pyruvate: step 2/4. Functionally, involved in the biosynthesis of branched-chain amino acids (BCAA). Catalyzes an alkyl-migration followed by a ketol-acid reduction of (S)-2-acetolactate (S2AL) to yield (R)-2,3-dihydroxy-isovalerate. In the isomerase reaction, S2AL is rearranged via a Mg-dependent methyl migration to produce 3-hydroxy-3-methyl-2-ketobutyrate (HMKB). In the reductase reaction, this 2-ketoacid undergoes a metal-dependent reduction by NADPH to yield (R)-2,3-dihydroxy-isovalerate. This is Ketol-acid reductoisomerase (NADP(+)) from Thiobacillus denitrificans (strain ATCC 25259 / T1).